The chain runs to 650 residues: 1-deoxy-D-xylulose-5-phosphate synthase (650 aa).

Residues histidine 73 and 114-116 (SHA) contribute to the thiamine diphosphate site. Residue aspartate 145 coordinates Mg(2+). Residues 146-147 (GA), asparagine 174, tyrosine 285, and glutamate 367 contribute to the thiamine diphosphate site. Mg(2+) is bound at residue asparagine 174. The segment at 631-650 (MGDEVGADESNQTPAGGGQA) is disordered.

This sequence belongs to the transketolase family. DXPS subfamily. As to quaternary structure, homodimer. It depends on Mg(2+) as a cofactor. The cofactor is thiamine diphosphate.

The catalysed reaction is D-glyceraldehyde 3-phosphate + pyruvate + H(+) = 1-deoxy-D-xylulose 5-phosphate + CO2. The protein operates within metabolic intermediate biosynthesis; 1-deoxy-D-xylulose 5-phosphate biosynthesis; 1-deoxy-D-xylulose 5-phosphate from D-glyceraldehyde 3-phosphate and pyruvate: step 1/1. In terms of biological role, catalyzes the acyloin condensation reaction between C atoms 2 and 3 of pyruvate and glyceraldehyde 3-phosphate to yield 1-deoxy-D-xylulose-5-phosphate (DXP). In Parafrankia sp. (strain EAN1pec), this protein is 1-deoxy-D-xylulose-5-phosphate synthase.